We begin with the raw amino-acid sequence, 270 residues long: tRNA pseudouridine synthase A (270 aa).

Asp60 functions as the Nucleophile in the catalytic mechanism. An RNA binding region spans residues 107–111; the sequence is FHARF. Tyr118 contributes to the substrate binding site. The interaction with tRNA stretch occupies residues 168–172; the sequence is QCQSR.

This sequence belongs to the tRNA pseudouridine synthase TruA family. In terms of assembly, homodimer.

The catalysed reaction is uridine(38/39/40) in tRNA = pseudouridine(38/39/40) in tRNA. In terms of biological role, formation of pseudouridine at positions 38, 39 and 40 in the anticodon stem and loop of transfer RNAs. In Escherichia coli (strain 55989 / EAEC), this protein is tRNA pseudouridine synthase A.